The chain runs to 558 residues: Formate--tetrahydrofolate ligase (558 aa).

65 to 72 (TPAGEGKT) is a binding site for ATP.

It belongs to the formate--tetrahydrofolate ligase family.

The enzyme catalyses (6S)-5,6,7,8-tetrahydrofolate + formate + ATP = (6R)-10-formyltetrahydrofolate + ADP + phosphate. The protein operates within one-carbon metabolism; tetrahydrofolate interconversion. The polypeptide is Formate--tetrahydrofolate ligase (Methylobacterium sp. (strain 4-46)).